We begin with the raw amino-acid sequence, 995 residues long: Putative pentatricopeptide repeat-containing protein At5g09950 (995 aa).

PPR repeat units lie at residues D35 to R65, N66 to S100, N101 to V137, D138 to K169, N170 to P204, T205 to T241, D242 to T276, N278 to M303, S307 to T342, M348 to K378, D379 to P413, G414 to L448, N449 to S483, W484 to L515, N516 to D550, E551 to R581, D583 to L617, D618 to S652, D653 to R683, N684 to P718, D720 to S750, and R756 to K786. Residues I791–K868 form a type E motif region. The tract at residues D869 to R899 is type E(+) motif. A type DYW motif region spans residues D900–W995.

Belongs to the PPR family. PCMP-H subfamily.

In Arabidopsis thaliana (Mouse-ear cress), this protein is Putative pentatricopeptide repeat-containing protein At5g09950 (PCMP-H35).